We begin with the raw amino-acid sequence, 284 residues long: Tropomyosin beta chain (284 aa).

N-acetylmethionine is present on Met1. The interval Met1–Ala78 is disordered. Positions Met1–Leu284 form a coiled coil. Basic and acidic residues-rich tracts occupy residues Lys12–Glu40 and Lys51–Ala78. At Thr53 the chain carries Phosphothreonine. Ser61 carries the post-translational modification Phosphoserine; by PIK3CG. At Thr79 the chain carries Phosphothreonine. Phosphoserine is present on Ser87. Thr108 is modified (phosphothreonine). The segment at Glu117–Lys136 is disordered. A phosphoserine mark is found at Ser158, Ser206, and Ser215. A Phosphothreonine modification is found at Thr252. Tyr261 carries the post-translational modification Phosphotyrosine. Residue Ser271 is modified to Phosphoserine. Residue Thr282 is modified to Phosphothreonine. The residue at position 283 (Ser283) is a Phosphoserine.

The protein belongs to the tropomyosin family. In terms of assembly, homodimer. Heterodimer of an alpha (TPM1, TPM3 or TPM4) and a beta (TPM2) chain. In terms of processing, phosphorylated on Ser-61 by PIK3CG. Phosphorylation on Ser-61 is required for ADRB2 internalization.

It is found in the cytoplasm. Its subcellular location is the cytoskeleton. In terms of biological role, binds to actin filaments in muscle and non-muscle cells. Plays a central role, in association with the troponin complex, in the calcium dependent regulation of vertebrate striated muscle contraction. Smooth muscle contraction is regulated by interaction with caldesmon. In non-muscle cells is implicated in stabilizing cytoskeleton actin filaments. The non-muscle isoform may have a role in agonist-mediated receptor internalization. The polypeptide is Tropomyosin beta chain (Tpm2) (Mus musculus (Mouse)).